Consider the following 471-residue polypeptide: V-type ATP synthase beta chain (471 aa).

Belongs to the ATPase alpha/beta chains family.

Its function is as follows. Produces ATP from ADP in the presence of a proton gradient across the membrane. The V-type beta chain is a regulatory subunit. This Deinococcus deserti (strain DSM 17065 / CIP 109153 / LMG 22923 / VCD115) protein is V-type ATP synthase beta chain.